Consider the following 308-residue polypeptide: MENKIAPFSYSGSSAGNSSSGGVVSSSLYSDQLYKSTRNIMQQRQDMVNREALCYTRLHEASLEAEALRLENTELRSMNLRLKNELNSLIRSSIQNRFDHRSPLRMLSNLSIGGNDADEVENQNRTVNRDDVNDKSPTSVMENEDLNRSSLPKSISVRSNGYSKASQGGGGAAAQSGKPRGTVTKPGTCGQVSTTQKVYVRGGGKKEDQEEEIEVEVYNQGMTKTELCNKWQETGTCPYGDHCQFAHGIKELRPVIRHPRYKTEVCRMVLAGDNCPYGHRCHFRHSLSEQEKLVAAGFKPKSSLKLIT.

Residues 1–21 form a disordered region; the sequence is MENKIAPFSYSGSSAGNSSSG. The segment covering 9–21 has biased composition (low complexity); it reads SYSGSSAGNSSSG. A coiled-coil region spans residues 56–91; the sequence is TRLHEASLEAEALRLENTELRSMNLRLKNELNSLIR. Residues 110–190 are disordered; the sequence is LSIGGNDADE…GTVTKPGTCG (81 aa). Position 111 is a phosphoserine (Ser111). A compositionally biased stretch (polar residues) spans 148-164; the sequence is RSSLPKSISVRSNGYSK. C3H1-type zinc fingers lie at residues 222-250 and 260-288; these read MTKTELCNKWQETGTCPYGDHCQFAHGIK and RYKTEVCRMVLAGDNCPYGHRCHFRHSLS.

In terms of processing, phosphorylated at Ser-111 by ASK7/BIN2 in the cytoplasm in the absence of brassinosteroids (BRs). Highly expressed in secondary cell wall-forming tissues and the xylem cells of roots. Expressed predominantly in inflorescence stems, flowers and siliques. Highly expressed in the basal portion of stems, where cells are undergoing secondary cell wall thickening. Highly expressed in meiocytes and tapetum from anthers.

It localises to the cytoplasm. It is found in the nucleus. Functionally, functions probably as a transcriptional factor that activates genes involved in secondary cell wall biosynthesis. Functions redudantly with C3H14 to regulate secondary cell wall formation. C3H14 and C3H15 have overlapping roles in the regulation of secondary cell wall formation and anther development. C3H14 may contribute more to secondary cell wall thickening while C3H15 could be more important in anther development. May regulate at both the transcriptional and post-transcriptional levels the expression of many genes involved in various biological processes, particularly those associated with cell wall metabolism and pollen development. Involved in the regulation of callose metabolism in male meiocytes, in integrity of newly formed microspores, and promotes male fertility. May be involved in the regulation of the callose synthesis genes CALS5 and CALS12, the potential degradation of callose walls-related genes A6 and MYB80, as well as other putative beta-1,3-glucanase genes. Negatively regulates cell elongation by inhibiting brassinosteroid (BR) signaling. Functions downstream of the BRI1 receptor as a negative regulator in the BR pathway. This Arabidopsis thaliana (Mouse-ear cress) protein is Zinc finger CCCH domain-containing protein 15.